A 118-amino-acid polypeptide reads, in one-letter code: MSGKNNIISQLEAEQMTKEIPAFAPGDTVVVQVRVTEGNRERLQAFEGVVIGKRNRGMNSSFTVRKISYGVGVERTFQTYSKLIDSVSVKRRGDVRQAKLYYLRDLSGKAARIKEKLN.

The protein belongs to the bacterial ribosomal protein bL19 family.

In terms of biological role, this protein is located at the 30S-50S ribosomal subunit interface and may play a role in the structure and function of the aminoacyl-tRNA binding site. In Marinobacter nauticus (strain ATCC 700491 / DSM 11845 / VT8) (Marinobacter aquaeolei), this protein is Large ribosomal subunit protein bL19.